The following is a 203-amino-acid chain: Superoxide dismutase [Mn] (203 aa).

The Mn(2+) site is built by H27, H81, D167, and H171.

It belongs to the iron/manganese superoxide dismutase family. As to quaternary structure, homodimer. It depends on Mn(2+) as a cofactor.

It catalyses the reaction 2 superoxide + 2 H(+) = H2O2 + O2. Destroys superoxide anion radicals which are normally produced within the cells and which are toxic to biological systems. The polypeptide is Superoxide dismutase [Mn] (sodA) (Buchnera aphidicola subsp. Acyrthosiphon pisum (strain APS) (Acyrthosiphon pisum symbiotic bacterium)).